The chain runs to 247 residues: Hydroxyacylglutathione hydrolase 1 (247 aa).

The Zn(2+) site is built by His-54, His-56, Asp-58, His-59, His-111, Asp-128, and His-165.

It belongs to the metallo-beta-lactamase superfamily. Glyoxalase II family. Monomer. Requires Zn(2+) as cofactor.

The enzyme catalyses an S-(2-hydroxyacyl)glutathione + H2O = a 2-hydroxy carboxylate + glutathione + H(+). It participates in secondary metabolite metabolism; methylglyoxal degradation; (R)-lactate from methylglyoxal: step 2/2. Thiolesterase that catalyzes the hydrolysis of S-D-lactoyl-glutathione to form glutathione and D-lactic acid. The chain is Hydroxyacylglutathione hydrolase 1 from Vibrio vulnificus (strain YJ016).